Reading from the N-terminus, the 229-residue chain is Coiled-coil domain-containing protein 134 (229 aa).

The N-terminal stretch at 1-22 (MDLLQFLAAFSVLLWPGTEVTG) is a signal peptide. Asparagine 148 carries N-linked (GlcNAc...) asparagine glycosylation. The tract at residues 182–229 (FKTDQTEFIPSTDPFQKALREEEKRRKKEERRKEIRKGPRISRSQSEL) is disordered. A coiled-coil region spans residues 196–218 (FQKALREEEKRRKKEERRKEIRK). Positions 226-229 (QSEL) match the Prevents secretion from ER motif.

The protein belongs to the CCDC134 family. In terms of assembly, interacts with TADA2A. Associates with the PCAF complex via TADA2A binding. In terms of processing, O-glycosylated, with additional sialic acid modifications.

The protein localises to the endoplasmic reticulum lumen. It localises to the secreted. Its subcellular location is the cytoplasm. The protein resides in the nucleus. Functionally, molecular adapter required to prevent protein hyperglycosylation of HSP90B1: during translation, associates with nascent HSP90B1 and the STT3A catalytic component of the OST-A complex and tethers them to a specialized translocon that forms a microenvironment for HSP90B1 folding. In the CCDC134-containing translocon, STT3A associates with the SRT pseudosubstrate motif of HSP90B1, preventing access to facultative glycosylation sites until folding is completed, preventing hyperglycosylation and subsequent degradation of HSP90B1. In extracellular secreted form, promotes proliferation and activation of CD8(+) T-cells, suggesting a cytokine-like function. May inhibit ERK and JNK signaling activity. May suppress cell migration and invasion activity, via its effects on ERK and JNK signaling. May also localize in the nucleus: enhances stability of the PCAF histone acetyltransferase (HAT) complex member TADA2A and thus promotes PCAF-mediated histone acetyltransferase activity. Has a critical role in the regulation of osteogenesis and bone development. This chain is Coiled-coil domain-containing protein 134 (Ccdc134), found in Mus musculus (Mouse).